The primary structure comprises 55 residues: Large ribosomal subunit protein bL33 (55 aa).

The protein belongs to the bacterial ribosomal protein bL33 family.

This chain is Large ribosomal subunit protein bL33, found in Pseudarthrobacter chlorophenolicus (strain ATCC 700700 / DSM 12829 / CIP 107037 / JCM 12360 / KCTC 9906 / NCIMB 13794 / A6) (Arthrobacter chlorophenolicus).